The chain runs to 124 residues: Ribonuclease pancreatic (124 aa).

Basic and acidic residues predominate over residues 1-13; that stretch reads SETAAEKFERQHM. The disordered stretch occupies residues 1 to 23; that stretch reads SETAAEKFERQHMDSYSSSSSNS. Substrate-binding residues include lysine 7 and arginine 10. Histidine 12 acts as the Proton acceptor in catalysis. Intrachain disulfides connect cysteine 26–cysteine 84, cysteine 40–cysteine 95, cysteine 58–cysteine 110, and cysteine 65–cysteine 72. Residues 41 to 45, lysine 66, and arginine 85 each bind substrate; that span reads KPVNT. Catalysis depends on histidine 119, which acts as the Proton donor.

The protein belongs to the pancreatic ribonuclease family. Monomer. Interacts with and forms tight 1:1 complexes with RNH1. Dimerization of two such complexes may occur. Interaction with RNH1 inhibits this protein. Pancreas.

The protein resides in the secreted. It catalyses the reaction an [RNA] containing cytidine + H2O = an [RNA]-3'-cytidine-3'-phosphate + a 5'-hydroxy-ribonucleotide-3'-[RNA].. It carries out the reaction an [RNA] containing uridine + H2O = an [RNA]-3'-uridine-3'-phosphate + a 5'-hydroxy-ribonucleotide-3'-[RNA].. Its function is as follows. Endonuclease that catalyzes the cleavage of RNA on the 3' side of pyrimidine nucleotides. Acts on single-stranded and double-stranded RNA. In Camelus dromedarius (Dromedary), this protein is Ribonuclease pancreatic (RNASE1).